The following is a 52-amino-acid chain: Lysis protein for colicin N (52 aa).

The first 17 residues, 1–17 (MCGKILLILFFIMTLSA), serve as a signal peptide directing secretion. The N-palmitoyl cysteine moiety is linked to residue C18. C18 carries S-diacylglycerol cysteine lipidation.

The protein resides in the cell outer membrane. Its function is as follows. Lysis proteins are required for both colicin release and partial cell lysis. In Escherichia coli, this protein is Lysis protein for colicin N (cnl).